Reading from the N-terminus, the 603-residue chain is Aspartate--tRNA(Asp/Asn) ligase (603 aa).

Residues 205–208 (QLFK) form an aspartate region. Arg-227 serves as a coordination point for L-aspartate. Residues 227–229 (RDE) and Gln-236 each bind ATP. His-463 contributes to the L-aspartate binding site. Glu-497 contacts ATP. L-aspartate is bound at residue Arg-504. ATP is bound at residue 549–552 (GMDR).

Belongs to the class-II aminoacyl-tRNA synthetase family. Type 1 subfamily. As to quaternary structure, homodimer.

Its subcellular location is the cytoplasm. The catalysed reaction is tRNA(Asx) + L-aspartate + ATP = L-aspartyl-tRNA(Asx) + AMP + diphosphate. Functionally, aspartyl-tRNA synthetase with relaxed tRNA specificity since it is able to aspartylate not only its cognate tRNA(Asp) but also tRNA(Asn). Reaction proceeds in two steps: L-aspartate is first activated by ATP to form Asp-AMP and then transferred to the acceptor end of tRNA(Asp/Asn). This chain is Aspartate--tRNA(Asp/Asn) ligase, found in Anaeromyxobacter dehalogenans (strain 2CP-C).